The chain runs to 210 residues: Large ribosomal subunit protein uL4 (210 aa).

Residues 41 to 51 (QNNARQGNASA) are compositionally biased toward polar residues. The segment at 41 to 77 (QNNARQGNASAKTRAEVRGGGRKPWKQKGTGRARAGS) is disordered. The segment covering 60–71 (GGRKPWKQKGTG) has biased composition (basic residues).

The protein belongs to the universal ribosomal protein uL4 family. Part of the 50S ribosomal subunit.

Its function is as follows. One of the primary rRNA binding proteins, this protein initially binds near the 5'-end of the 23S rRNA. It is important during the early stages of 50S assembly. It makes multiple contacts with different domains of the 23S rRNA in the assembled 50S subunit and ribosome. Forms part of the polypeptide exit tunnel. The sequence is that of Large ribosomal subunit protein uL4 from Synechocystis sp. (strain ATCC 27184 / PCC 6803 / Kazusa).